A 68-amino-acid chain; its full sequence is MDNRLLEILVCPLCKGKLEYDRAAQELICHADKLAYPIRDGIPVMLADEARQSVPGRAVNPDGPASGN.

The protein belongs to the UPF0434 family.

The protein is UPF0434 protein H16_A0605 of Cupriavidus necator (strain ATCC 17699 / DSM 428 / KCTC 22496 / NCIMB 10442 / H16 / Stanier 337) (Ralstonia eutropha).